A 542-amino-acid polypeptide reads, in one-letter code: CTP synthase (542 aa).

Positions 1–265 are amidoligase domain; the sequence is MTRYIFVTGG…DDIVVERFGL (265 aa). Residue S13 participates in CTP binding. S13 contacts UTP. ATP-binding positions include 14-19 and D71; that span reads SLGKGI. Mg(2+) contacts are provided by D71 and E139. Residues 146-148, 186-191, and K222 contribute to the CTP site; these read DIE and KTKPTQ. UTP contacts are provided by residues 186–191 and K222; that span reads KTKPTQ. The 252-residue stretch at 290–541 folds into the Glutamine amidotransferase type-1 domain; that stretch reads TIAMVGKYME…VNAALKYSGK (252 aa). G351 is a binding site for L-glutamine. Residue C378 is the Nucleophile; for glutamine hydrolysis of the active site. L-glutamine contacts are provided by residues 379–382, E402, and R469; that span reads LGMQ. Residues H514 and E516 contribute to the active site.

It belongs to the CTP synthase family. Homotetramer.

It carries out the reaction UTP + L-glutamine + ATP + H2O = CTP + L-glutamate + ADP + phosphate + 2 H(+). The enzyme catalyses L-glutamine + H2O = L-glutamate + NH4(+). It catalyses the reaction UTP + NH4(+) + ATP = CTP + ADP + phosphate + 2 H(+). The protein operates within pyrimidine metabolism; CTP biosynthesis via de novo pathway; CTP from UDP: step 2/2. Its activity is regulated as follows. Allosterically activated by GTP, when glutamine is the substrate; GTP has no effect on the reaction when ammonia is the substrate. The allosteric effector GTP functions by stabilizing the protein conformation that binds the tetrahedral intermediate(s) formed during glutamine hydrolysis. Inhibited by the product CTP, via allosteric rather than competitive inhibition. Catalyzes the ATP-dependent amination of UTP to CTP with either L-glutamine or ammonia as the source of nitrogen. Regulates intracellular CTP levels through interactions with the four ribonucleotide triphosphates. The chain is CTP synthase from Pseudomonas aeruginosa (strain LESB58).